The following is a 457-amino-acid chain: UDP-N-acetylglucosamine 1-carboxyvinyltransferase (457 aa).

Phosphoenolpyruvate is bound at residue 34-35; that stretch reads KN. Position 104 (Arg-104) interacts with UDP-N-acetyl-alpha-D-glucosamine. Cys-128 serves as the catalytic Proton donor. Residue Cys-128 is modified to 2-(S-cysteinyl)pyruvic acid O-phosphothioketal. UDP-N-acetyl-alpha-D-glucosamine is bound by residues Asp-319 and Ile-341. Residues 436–457 are disordered; that stretch reads INKSKNRSSNSKLKEVSEIRAA. Basic and acidic residues predominate over residues 447–457; that stretch reads KLKEVSEIRAA.

This sequence belongs to the EPSP synthase family. MurA subfamily.

It is found in the cytoplasm. It carries out the reaction phosphoenolpyruvate + UDP-N-acetyl-alpha-D-glucosamine = UDP-N-acetyl-3-O-(1-carboxyvinyl)-alpha-D-glucosamine + phosphate. Its pathway is cell wall biogenesis; peptidoglycan biosynthesis. Functionally, cell wall formation. Adds enolpyruvyl to UDP-N-acetylglucosamine. The chain is UDP-N-acetylglucosamine 1-carboxyvinyltransferase from Prochlorococcus marinus subsp. pastoris (strain CCMP1986 / NIES-2087 / MED4).